The primary structure comprises 92 residues: Small archaeal modifier protein 3 (92 aa).

Glycyl lysine isopeptide (Lys-Gly) (interchain with G-Cter in SAMP3) cross-links involve residues Lys-18, Lys-55, and Lys-62. Glycyl adenylate; alternate is present on Gly-92. Gly-92 is covalently cross-linked (Glycyl lysine isopeptide (Gly-Lys) (interchain with K-? in acceptor proteins); alternate).

As to quaternary structure, monomer. In terms of processing, the C-terminal glycine is likely acyl-adenylated (-COAMP) by UbaA.

Its function is as follows. Functions as a protein modifier covalently attached to lysine residues of substrate proteins. The protein modification process is termed sampylation and involves the formation of an isopeptide bond between the SAMP3 C-terminal glycine carboxylate and the epsilon-amino group of lysine residues on target proteins. Seems to be able to form polymeric chains with itself at Lys-18, Lys-55 and Lys-62, similar to ubiquitin and other ubiquitin-like proteins. SAMP3 appears not to serve as a proteolytic signal in the cell to target proteins for degradation by proteasomes. May regulate molybdenum cofactor (MoCo) biosynthesis by inhibiting the activity of MPT synthase MoaE under aerobic conditions, providing a hierarchy of oxygen use prior to that of alternative electron acceptors such as DMSO. The polypeptide is Small archaeal modifier protein 3 (samp3) (Haloferax volcanii (strain ATCC 29605 / DSM 3757 / JCM 8879 / NBRC 14742 / NCIMB 2012 / VKM B-1768 / DS2) (Halobacterium volcanii)).